We begin with the raw amino-acid sequence, 147 residues long: Hemoglobin subunit gamma-1 (147 aa).

Residues 3–147 (NFTAEDKAAI…VASALGSRYH (145 aa)) form the Globin domain. The residue at position 13 (Thr-13) is a Phosphothreonine. A phosphoserine mark is found at Ser-45, Ser-51, and Ser-53. Lys-60 is modified (N6-acetyllysine). Residue His-64 participates in heme b binding. Lys-83 carries the N6-acetyllysine modification. A heme b-binding site is contributed by His-93. Cys-94 bears the S-nitrosocysteine mark. Ser-140 is modified (phosphoserine).

It belongs to the globin family. As to quaternary structure, heterotetramer of two alpha chains and two gamma chains in fetal hemoglobin (Hb F). Red blood cells.

Gamma chains make up the fetal hemoglobin F, in combination with alpha chains. The sequence is that of Hemoglobin subunit gamma-1 (HBG1) from Plecturocebus moloch (Dusky titi monkey).